The following is a 185-amino-acid chain: Ribosome-recycling factor (185 aa).

The disordered stretch occupies residues 136–159 (NEQLKSQQKDGKMSEDELKRSQDE).

It belongs to the RRF family.

The protein resides in the cytoplasm. Its function is as follows. Responsible for the release of ribosomes from messenger RNA at the termination of protein biosynthesis. May increase the efficiency of translation by recycling ribosomes from one round of translation to another. The chain is Ribosome-recycling factor from Pelotomaculum thermopropionicum (strain DSM 13744 / JCM 10971 / SI).